The sequence spans 316 residues: Putative transketolase C-terminal section (316 aa).

Belongs to the transketolase family. The cofactor is thiamine diphosphate.

It catalyses the reaction D-sedoheptulose 7-phosphate + D-glyceraldehyde 3-phosphate = aldehydo-D-ribose 5-phosphate + D-xylulose 5-phosphate. The sequence is that of Putative transketolase C-terminal section from Methanocaldococcus jannaschii (strain ATCC 43067 / DSM 2661 / JAL-1 / JCM 10045 / NBRC 100440) (Methanococcus jannaschii).